The chain runs to 182 residues: ADP-ribosylation factor-like protein 3 (182 aa).

Gly2 carries the N-myristoyl glycine lipid modification. Ser5 is modified (phosphoserine). GTP contacts are provided by residues 24-31, Thr48, 67-71, Gly70, 126-129, and 159-161; these read GLDNAGKT, DIGGQ, NKQD, and SAL. Residues Thr31 and Thr48 each contribute to the Mg(2+) site.

It belongs to the small GTPase superfamily. Arf family. In terms of assembly, found in a complex with ARL3, RP2 and UNC119 (or UNC119B); RP2 induces hydrolysis of GTP ARL3 in the complex, leading to the release of UNC119 (or UNC119B). Interacts with RP2; interaction is direct and stimulated with the activated GTP-bound form of ARL3. Interacts with SYS1. The GTP-bound form interacts with ARL2BP and PDE6D. Microtubule-associated protein. May interact with GOLGA4. Interacts with GGA1; the interaction recruits PKD1:PKD2 complex to trans-Golgi network and is required for ciliary targeting of PKD1:PKD2 complex. Interacts with DNAAF9. In terms of tissue distribution, expressed in the retina. Strongly expressed in connecting cilium, the myoid region of the inner segments (IS) and in cone photoreceptors (at protein level).

The protein localises to the golgi apparatus membrane. Its subcellular location is the cytoplasm. The protein resides in the cytoskeleton. It is found in the spindle. It localises to the nucleus. The protein localises to the microtubule organizing center. Its subcellular location is the centrosome. The protein resides in the cell projection. It is found in the cilium. Its function is as follows. Small GTP-binding protein which cycles between an inactive GDP-bound and an active GTP-bound form, and the rate of cycling is regulated by guanine nucleotide exchange factors (GEF) and GTPase-activating proteins (GAP). Required for normal cytokinesis and cilia signaling. Requires assistance from GTPase-activating proteins (GAPs) like RP2 and PDE6D, in order to cycle between inactive GDP-bound and active GTP-bound forms. Required for targeting proteins to the cilium, including myristoylated NPHP3 and prenylated INPP5E. Targets NPHP3 to the ciliary membrane by releasing myristoylated NPHP3 from UNC119B cargo adapter into the cilium. Required for PKD1:PKD2 complex targeting from the trans-Golgi network to the cilium. In Homo sapiens (Human), this protein is ADP-ribosylation factor-like protein 3 (ARL3).